We begin with the raw amino-acid sequence, 503 residues long: Lanosterol 14-alpha demethylase (503 aa).

Residues 24–44 traverse the membrane as a helical segment; it reads GNLLSTLLIACAFTLSLVYLF. Cys-449 serves as a coordination point for heme.

This sequence belongs to the cytochrome P450 family. Requires heme as cofactor. Post-translationally, ubiquitinated by MARCHF6, leading to proteasomal degradation.

It localises to the endoplasmic reticulum membrane. The protein resides in the microsome membrane. The enzyme catalyses a 14alpha-methyl steroid + 3 reduced [NADPH--hemoprotein reductase] + 3 O2 = a Delta(14) steroid + formate + 3 oxidized [NADPH--hemoprotein reductase] + 4 H2O + 4 H(+). It carries out the reaction lanosterol + 3 reduced [NADPH--hemoprotein reductase] + 3 O2 = 4,4-dimethyl-5alpha-cholesta-8,14,24-trien-3beta-ol + formate + 3 oxidized [NADPH--hemoprotein reductase] + 4 H2O + 4 H(+). The catalysed reaction is 24,25-dihydrolanosterol + 3 reduced [NADPH--hemoprotein reductase] + 3 O2 = 4,4-dimethyl-8,14-cholestadien-3beta-ol + formate + 3 oxidized [NADPH--hemoprotein reductase] + 4 H2O + 4 H(+). It catalyses the reaction a 14alpha-methyl steroid + reduced [NADPH--hemoprotein reductase] + O2 = a 14alpha-hydroxymethyl steroid + oxidized [NADPH--hemoprotein reductase] + H2O + H(+). The enzyme catalyses a 14alpha-hydroxymethyl steroid + reduced [NADPH--hemoprotein reductase] + O2 = a 14alpha-formyl steroid + oxidized [NADPH--hemoprotein reductase] + 2 H2O + H(+). It carries out the reaction a 14alpha-formyl steroid + reduced [NADPH--hemoprotein reductase] + O2 = a Delta(14) steroid + formate + oxidized [NADPH--hemoprotein reductase] + H2O + 2 H(+). The catalysed reaction is lanosterol + reduced [NADPH--hemoprotein reductase] + O2 = 32-hydroxylanosterol + oxidized [NADPH--hemoprotein reductase] + H2O + H(+). It catalyses the reaction 32-hydroxylanosterol + reduced [NADPH--hemoprotein reductase] + O2 = 32-oxolanosterol + oxidized [NADPH--hemoprotein reductase] + 2 H2O + H(+). The enzyme catalyses 32-oxolanosterol + reduced [NADPH--hemoprotein reductase] + O2 = 4,4-dimethyl-5alpha-cholesta-8,14,24-trien-3beta-ol + formate + oxidized [NADPH--hemoprotein reductase] + H2O + 2 H(+). It carries out the reaction 24,25-dihydrolanosterol + reduced [NADPH--hemoprotein reductase] + O2 = 32-hydroxy-24,25-dihydrolanosterol + oxidized [NADPH--hemoprotein reductase] + H2O + H(+). The catalysed reaction is 32-hydroxy-24,25-dihydrolanosterol + reduced [NADPH--hemoprotein reductase] + O2 = 32-oxo-24,25-dihydrolanosterol + oxidized [NADPH--hemoprotein reductase] + 2 H2O + H(+). It catalyses the reaction 32-oxo-24,25-dihydrolanosterol + reduced [NADPH--hemoprotein reductase] + O2 = 4,4-dimethyl-8,14-cholestadien-3beta-ol + formate + oxidized [NADPH--hemoprotein reductase] + H2O + 2 H(+). The protein operates within steroid biosynthesis; zymosterol biosynthesis; zymosterol from lanosterol: step 1/6. Inhibited by azalanstat. Inhibited by azole antifungal agents ketoconazole, itraconazole and fluconazole. Sterol 14alpha-demethylase that plays a critical role in the cholesterol biosynthesis pathway, being cholesterol the major sterol component in mammalian membranes as well as a precursor for bile acid and steroid hormone synthesis. Cytochrome P450 monooxygenase that catalyzes the three-step oxidative removal of the 14alpha-methyl group (C-32) of sterols such as lanosterol (lanosta-8,24-dien-3beta-ol) and 24,25-dihydrolanosterol (DHL) in the form of formate, and converts the sterols to 4,4-dimethyl-5alpha-cholesta-8,14,24-trien-3beta-ol and 4,4-dimethyl-8,14-cholestadien-3beta-ol, respectively, which are intermediates of cholesterol biosynthesis. Can also demethylate substrates not intrinsic to mammals, such as eburicol (24-methylene-24,25-dihydrolanosterol), but at a lower rate than DHL. In Mus musculus (Mouse), this protein is Lanosterol 14-alpha demethylase.